A 230-amino-acid chain; its full sequence is MIKTQSKLSDPRLQSRIGYEFKQLELLQLALTHRSVSHKYNYERLEFLGDSLLGMIIANYLYQAYPHENEGRLTRMRATLVRQEALGKIANDLKLSRCLILSTGELKSGGHHRESILADTVEAIIGAIYVDSNDLNLLKNIVLKWYIPYLDHIEPTDQLKDPKSRLQEYLQARKKPLPVYEVVDIQGDAPNQHFKVVCLVEGLPRVMGEGSSRRFAEQTAAAEILKLLEQ.

The 124-residue stretch at 10–133 folds into the RNase III domain; the sequence is DPRLQSRIGY…IIGAIYVDSN (124 aa). Glu46 lines the Mg(2+) pocket. The active site involves Asp50. Mg(2+)-binding residues include Asp119 and Glu122. The active site involves Glu122. The 70-residue stretch at 161 to 230 folds into the DRBM domain; the sequence is DPKSRLQEYL…AAEILKLLEQ (70 aa).

The protein belongs to the ribonuclease III family. As to quaternary structure, homodimer. It depends on Mg(2+) as a cofactor.

The protein resides in the cytoplasm. The enzyme catalyses Endonucleolytic cleavage to 5'-phosphomonoester.. Functionally, digests double-stranded RNA. Involved in the processing of primary rRNA transcript to yield the immediate precursors to the large and small rRNAs (23S and 16S). Processes some mRNAs, and tRNAs when they are encoded in the rRNA operon. Processes pre-crRNA and tracrRNA of type II CRISPR loci if present in the organism. The sequence is that of Ribonuclease 3 from Acinetobacter baylyi (strain ATCC 33305 / BD413 / ADP1).